Consider the following 74-residue polypeptide: uncharacterized protein (74 aa).

Disordered stretches follow at residues methionine 1–phenylalanine 26 and isoleucine 46–glutamine 74. Residues valine 34–proline 50 traverse the membrane as a helical segment. Low complexity predominate over residues threonine 47–glutamine 74.

It localises to the membrane. This is an uncharacterized protein from Dictyostelium discoideum (Social amoeba).